The sequence spans 120 residues: Glycine cleavage system H protein (120 aa).

The region spanning 19 to 101 is the Lipoyl-binding domain; sequence DGTVGISDFA…YTDGWLFRLD (83 aa). Lys60 carries the post-translational modification N6-lipoyllysine.

This sequence belongs to the GcvH family. In terms of assembly, the glycine cleavage system is composed of four proteins: P, T, L and H. Requires (R)-lipoate as cofactor.

The glycine cleavage system catalyzes the degradation of glycine. The H protein shuttles the methylamine group of glycine from the P protein to the T protein. The polypeptide is Glycine cleavage system H protein (Deinococcus geothermalis (strain DSM 11300 / CIP 105573 / AG-3a)).